The following is a 139-amino-acid chain: S-adenosylmethionine decarboxylase proenzyme (139 aa).

Ser-63 (schiff-base intermediate with substrate; via pyruvic acid) is an active-site residue. The residue at position 63 (Ser-63) is a Pyruvic acid (Ser); by autocatalysis. Residue His-68 is the Proton acceptor; for processing activity of the active site. The active-site Proton donor; for catalytic activity is the Cys-83.

This sequence belongs to the prokaryotic AdoMetDC family. Type 1 subfamily. As to quaternary structure, heterotetramer of two alpha and two beta chains arranged as a dimer of alpha/beta heterodimers. The cofactor is pyruvate. In terms of processing, is synthesized initially as an inactive proenzyme. Formation of the active enzyme involves a self-maturation process in which the active site pyruvoyl group is generated from an internal serine residue via an autocatalytic post-translational modification. Two non-identical subunits are generated from the proenzyme in this reaction, and the pyruvate is formed at the N-terminus of the alpha chain, which is derived from the carboxyl end of the proenzyme. The post-translation cleavage follows an unusual pathway, termed non-hydrolytic serinolysis, in which the side chain hydroxyl group of the serine supplies its oxygen atom to form the C-terminus of the beta chain, while the remainder of the serine residue undergoes an oxidative deamination to produce ammonia and the pyruvoyl group blocking the N-terminus of the alpha chain.

The catalysed reaction is S-adenosyl-L-methionine + H(+) = S-adenosyl 3-(methylsulfanyl)propylamine + CO2. It participates in amine and polyamine biosynthesis; S-adenosylmethioninamine biosynthesis; S-adenosylmethioninamine from S-adenosyl-L-methionine: step 1/1. Functionally, catalyzes the decarboxylation of S-adenosylmethionine to S-adenosylmethioninamine (dcAdoMet), the propylamine donor required for the synthesis of the polyamines spermine and spermidine from the diamine putrescine. This Pyrococcus abyssi (strain GE5 / Orsay) protein is S-adenosylmethionine decarboxylase proenzyme.